Reading from the N-terminus, the 229-residue chain is Aspartate-rich protein 1 (229 aa).

A disordered region spans residues 84-106 (SEEDNDDAKILPSPVQGSSEDNL).

This Homo sapiens (Human) protein is Aspartate-rich protein 1 (DRICH1).